Here is a 505-residue protein sequence, read N- to C-terminus: Acetylcholine receptor subunit beta (505 aa).

The N-terminal stretch at 1–24 (MTPGALLLLLLGVLGAHLAPGARG) is a signal peptide. Residues 25–245 (SEAEGRLREK…VTFYLIIRRK (221 aa)) lie on the Extracellular side of the membrane. A disulfide bridge connects residues Cys152 and Cys166. A glycan (N-linked (GlcNAc...) asparagine) is linked at Asn165. 3 consecutive transmembrane segments (helical) span residues 246 to 270 (PLFYLVNVIAPCILITLLAIFVFYL), 278 to 295 (MGLSIFALLTLTVFLLLL), and 312 to 333 (YLMFTMVLVTFSVILSVVVLNL). Topologically, residues 334-473 (HHRSPHTHQM…WQFVAMVVDR (140 aa)) are cytoplasmic. The disordered stretch occupies residues 365–391 (KPERDQMQEPPSIAPRDSPGSGWGRGT). A Phosphotyrosine; by Tyr-kinases modification is found at Tyr394. The chain crosses the membrane as a helical span at residues 474–492 (LFLWTFIIFTSVGTLVIFL).

It belongs to the ligand-gated ion channel (TC 1.A.9) family. Acetylcholine receptor (TC 1.A.9.1) subfamily. Beta-1/CHRNB1 sub-subfamily. In terms of assembly, pentamer of two alpha chains, and one each of the beta, delta, and gamma (in immature muscle) or epsilon (in mature muscle) chains. The muscle heteropentamer composed of alpha-1, beta-1, delta, epsilon subunits interacts with the alpha-conotoxin ImII.

It localises to the postsynaptic cell membrane. Its subcellular location is the cell membrane. It catalyses the reaction K(+)(in) = K(+)(out). The enzyme catalyses Na(+)(in) = Na(+)(out). Functionally, after binding acetylcholine, the AChR responds by an extensive change in conformation that affects all subunits and leads to opening of an ion-conducting channel across the plasma membrane. The sequence is that of Acetylcholine receptor subunit beta (CHRNB1) from Bos taurus (Bovine).